A 396-amino-acid chain; its full sequence is MSDVIKKFLKLEAASGIILIMAAMLAMILANSGLAGSYQAFLDTQVQVRIAALDINKPLLLWINDGFMAVFFLLVGLEVKREMLEGALSSRVQATFPAIAAVGGMLAPALIYAFFNYSDEVARAGWAIPAATDIAFALGVMALLGKRVPVSLKVFLLALAIMDDLGVIIIIALFYTQQLSLTALAIGILATLTLLWMNRRGEDRISLYMLVGLVLWVAVLKSGVHATLAGVIVGFMIPLSGKRYASPLKQLEHALHPWSAYLILPLFAFANAGVSLEGIGLSALLSPVPLGIMLGLFIGKPLGVFTISWLAVKLGIAQLPNGVNFKQIFAVSILCGIGFTMSMFIASLAFEHGGLDYGSYSRLGILVGSTLAAIVGYLALRIALPNREADQSTEGL.

The next 11 helical transmembrane spans lie at 16 to 36, 59 to 79, 95 to 115, 124 to 144, 154 to 174, 178 to 198, 213 to 233, 254 to 274, 278 to 298, 328 to 348, and 363 to 383; these read GIIL…GLAG, LLLW…GLEV, TFPA…YAFF, AGWA…MALL, VFLL…IALF, QLSL…LWMN, LVLW…GVIV, ALHP…NAGV, GIGL…GLFI, IFAV…IASL, and LGIL…LRIA.

The protein belongs to the NhaA Na(+)/H(+) (TC 2.A.33) antiporter family.

The protein localises to the cell inner membrane. It catalyses the reaction Na(+)(in) + 2 H(+)(out) = Na(+)(out) + 2 H(+)(in). Functionally, na(+)/H(+) antiporter that extrudes sodium in exchange for external protons. The chain is Na(+)/H(+) antiporter NhaA from Aeromonas hydrophila subsp. hydrophila (strain ATCC 7966 / DSM 30187 / BCRC 13018 / CCUG 14551 / JCM 1027 / KCTC 2358 / NCIMB 9240 / NCTC 8049).